The following is a 342-amino-acid chain: MTNILSPEKSENDQELPIRPSYLQEFVGQQQIKENLSVFIKAAKSRNEHLDHTLFYGPPGLGKTTLAKIISNEIGGNFKSTSGPAILKVADLAAILTNLEKNDVLFIDEIHRLNTAVEEVLYPAMEDFELDIIIGEGSAARSVKITLPKFTLIGATTRLGLLSNPLRDRFGIPMRLNFYNTEELKKVLNRASKLLDIDLTDSGSEEIAKRSRGTPRIALRLLRRIRDFAAVDGKSRVDKEISDFGLKRLEVDRIGLDSNDYRYLKFIADNYNGGPVGIETIAAALSEQRDALEETIEPYLIQIGLLQRTPRGRVITIAAFEHLKMPVPNQSHHQFNIFNENE.

Residues 1–179 form a large ATPase domain (RuvB-L) region; sequence MTNILSPEKS…FGIPMRLNFY (179 aa). ATP-binding positions include Ile18, Arg19, Gly60, Lys63, Thr64, Thr65, 126-128, Arg169, Tyr179, and Arg216; that span reads EDF. Thr64 contributes to the Mg(2+) binding site. Residues 180 to 250 are small ATPAse domain (RuvB-S); that stretch reads NTEELKKVLN…ISDFGLKRLE (71 aa). A head domain (RuvB-H) region spans residues 253 to 342; sequence RIGLDSNDYR…HQFNIFNENE (90 aa). DNA-binding residues include Arg289, Arg308, and Arg313.

It belongs to the RuvB family. Homohexamer. Forms an RuvA(8)-RuvB(12)-Holliday junction (HJ) complex. HJ DNA is sandwiched between 2 RuvA tetramers; dsDNA enters through RuvA and exits via RuvB. An RuvB hexamer assembles on each DNA strand where it exits the tetramer. Each RuvB hexamer is contacted by two RuvA subunits (via domain III) on 2 adjacent RuvB subunits; this complex drives branch migration. In the full resolvosome a probable DNA-RuvA(4)-RuvB(12)-RuvC(2) complex forms which resolves the HJ.

The protein resides in the cytoplasm. It carries out the reaction ATP + H2O = ADP + phosphate + H(+). Functionally, the RuvA-RuvB-RuvC complex processes Holliday junction (HJ) DNA during genetic recombination and DNA repair, while the RuvA-RuvB complex plays an important role in the rescue of blocked DNA replication forks via replication fork reversal (RFR). RuvA specifically binds to HJ cruciform DNA, conferring on it an open structure. The RuvB hexamer acts as an ATP-dependent pump, pulling dsDNA into and through the RuvAB complex. RuvB forms 2 homohexamers on either side of HJ DNA bound by 1 or 2 RuvA tetramers; 4 subunits per hexamer contact DNA at a time. Coordinated motions by a converter formed by DNA-disengaged RuvB subunits stimulates ATP hydrolysis and nucleotide exchange. Immobilization of the converter enables RuvB to convert the ATP-contained energy into a lever motion, pulling 2 nucleotides of DNA out of the RuvA tetramer per ATP hydrolyzed, thus driving DNA branch migration. The RuvB motors rotate together with the DNA substrate, which together with the progressing nucleotide cycle form the mechanistic basis for DNA recombination by continuous HJ branch migration. Branch migration allows RuvC to scan DNA until it finds its consensus sequence, where it cleaves and resolves cruciform DNA. This chain is Holliday junction branch migration complex subunit RuvB, found in Rickettsia peacockii (strain Rustic).